A 469-amino-acid polypeptide reads, in one-letter code: Glutamate--tRNA ligase (469 aa).

Residues 11 to 21 carry the 'HIGH' region motif; sequence PSPTGFIHLGN. The 'KMSKS' region motif lies at 243-247; the sequence is KMSKR. Lys-246 contacts ATP.

This sequence belongs to the class-I aminoacyl-tRNA synthetase family. Glutamate--tRNA ligase type 1 subfamily. As to quaternary structure, monomer.

The protein resides in the cytoplasm. It carries out the reaction tRNA(Glu) + L-glutamate + ATP = L-glutamyl-tRNA(Glu) + AMP + diphosphate. Its function is as follows. Catalyzes the attachment of glutamate to tRNA(Glu) in a two-step reaction: glutamate is first activated by ATP to form Glu-AMP and then transferred to the acceptor end of tRNA(Glu). The polypeptide is Glutamate--tRNA ligase (Burkholderia cenocepacia (strain ATCC BAA-245 / DSM 16553 / LMG 16656 / NCTC 13227 / J2315 / CF5610) (Burkholderia cepacia (strain J2315))).